Consider the following 240-residue polypeptide: Eukaryotic translation initiation factor 3 subunit J (240 aa).

Residues 1–66 (MADDWESAAD…VPVKTKPSKA (66 aa)) are disordered. A compositionally biased stretch (acidic residues) spans 27–45 (GEDDDDDVKESWEDEEEKK).

The protein belongs to the eIF-3 subunit J family. As to quaternary structure, component of the eukaryotic translation initiation factor 3 (eIF-3) complex. The eIF-3 complex interacts with pix.

Its subcellular location is the cytoplasm. In terms of biological role, component of the eukaryotic translation initiation factor 3 (eIF-3) complex, which is involved in protein synthesis of a specialized repertoire of mRNAs and, together with other initiation factors, stimulates binding of mRNA and methionyl-tRNAi to the 40S ribosome. The eIF-3 complex specifically targets and initiates translation of a subset of mRNAs involved in cell proliferation. The protein is Eukaryotic translation initiation factor 3 subunit J of Drosophila persimilis (Fruit fly).